The sequence spans 385 residues: Aspartate carbamoyltransferase 2, chloroplastic (385 aa).

The transit peptide at 1–30 (MTASSSLFSCSMHMEVLTPKISKWPKNFVS) directs the protein to the chloroplast. Arginine 131 and threonine 132 together coordinate carbamoyl phosphate. Residues arginine 131 and threonine 132 each coordinate UMP. L-aspartate is bound at residue lysine 161. Residues arginine 182, histidine 210, and glutamine 213 each coordinate carbamoyl phosphate. UMP-binding residues include arginine 182 and histidine 210. Arginine 243 and arginine 305 together coordinate UMP. 2 residues coordinate L-aspartate: arginine 243 and arginine 305. Residues leucine 345 and proline 346 each coordinate carbamoyl phosphate.

The protein belongs to the aspartate/ornithine carbamoyltransferase superfamily. ATCase family. As to quaternary structure, homotrimer.

The protein resides in the plastid. It is found in the chloroplast. It catalyses the reaction carbamoyl phosphate + L-aspartate = N-carbamoyl-L-aspartate + phosphate + H(+). Its pathway is pyrimidine metabolism; UMP biosynthesis via de novo pathway; (S)-dihydroorotate from bicarbonate: step 2/3. Its activity is regulated as follows. Feedback inhibited by UMP. Its function is as follows. Catalyzes the condensation of carbamoyl phosphate and aspartate to form carbamoyl aspartate and inorganic phosphate, the committed step in the de novo pyrimidine nucleotide biosynthesis pathway. In Pisum sativum (Garden pea), this protein is Aspartate carbamoyltransferase 2, chloroplastic (PYRB2).